The primary structure comprises 285 residues: Bifunctional protein FolD (285 aa).

NADP(+)-binding positions include 165–167 and S190; that span reads GAS.

The protein belongs to the tetrahydrofolate dehydrogenase/cyclohydrolase family. As to quaternary structure, homodimer.

The catalysed reaction is (6R)-5,10-methylene-5,6,7,8-tetrahydrofolate + NADP(+) = (6R)-5,10-methenyltetrahydrofolate + NADPH. The enzyme catalyses (6R)-5,10-methenyltetrahydrofolate + H2O = (6R)-10-formyltetrahydrofolate + H(+). It functions in the pathway one-carbon metabolism; tetrahydrofolate interconversion. In terms of biological role, catalyzes the oxidation of 5,10-methylenetetrahydrofolate to 5,10-methenyltetrahydrofolate and then the hydrolysis of 5,10-methenyltetrahydrofolate to 10-formyltetrahydrofolate. In Cupriavidus metallidurans (strain ATCC 43123 / DSM 2839 / NBRC 102507 / CH34) (Ralstonia metallidurans), this protein is Bifunctional protein FolD.